The primary structure comprises 88 residues: EMBRYO SURROUNDING FACTOR 1-like protein 7 (88 aa).

The first 22 residues, 1 to 22, serve as a signal peptide directing secretion; that stretch reads MKSSHIALICIVMFSLFALHES. Cystine bridges form between Cys41–Cys57, Cys46–Cys85, Cys55–Cys81, and Cys58–Cys68.

It belongs to the MEG family. In terms of tissue distribution, expressed in leaves and flowers.

The chain is EMBRYO SURROUNDING FACTOR 1-like protein 7 (ESFL7) from Arabidopsis thaliana (Mouse-ear cress).